The following is a 254-amino-acid chain: Zinc import ATP-binding protein ZnuC (254 aa).

An ABC transporter domain is found at 5–221 (ICAADLSVSH…PAYRALFGSE (217 aa)). Position 38–45 (38–45 (GPNGSGKS)) interacts with ATP. The segment covering 234-245 (DHDHDHVAEGHR) has biased composition (basic and acidic residues). Residues 234–254 (DHDHDHVAEGHRHGPACAHPH) are disordered.

The protein belongs to the ABC transporter superfamily. Zinc importer (TC 3.A.1.15.5) family. As to quaternary structure, the complex is composed of two ATP-binding proteins (ZnuC), two transmembrane proteins (ZnuB) and a solute-binding protein (ZnuA).

The protein localises to the cell inner membrane. The enzyme catalyses Zn(2+)(out) + ATP(in) + H2O(in) = Zn(2+)(in) + ADP(in) + phosphate(in) + H(+)(in). Functionally, part of the ABC transporter complex ZnuABC involved in zinc import. Responsible for energy coupling to the transport system. This chain is Zinc import ATP-binding protein ZnuC, found in Paracoccus denitrificans (strain Pd 1222).